Consider the following 340-residue polypeptide: Serine racemase (340 aa).

Glutamate 13 provides a ligand contact to Mg(2+). ATP is bound by residues serine 31, serine 32, isoleucine 33, lysine 51, and threonine 52. Lysine 56 serves as the catalytic Proton acceptor. N6-(pyridoxal phosphate)lysine is present on lysine 56. 2 residues coordinate Ca(2+): proline 69 and threonine 81. Residue serine 84 is the Proton acceptor of the active site. A pyridoxal 5'-phosphate-binding site is contributed by asparagine 86. Residue glutamine 89 participates in ATP binding. The residue at position 113 (cysteine 113) is an S-nitrosocysteine. Tyrosine 121 is a binding site for ATP. Residue asparagine 154 coordinates pyridoxal 5'-phosphate. Residue aspartate 178 participates in Mg(2+) binding. Pyridoxal 5'-phosphate contacts are provided by glycine 185, glycine 186, glycine 187, glycine 188, and methionine 189. Mg(2+) is bound by residues glutamate 210, alanine 214, aspartate 216, and asparagine 247. Residues glutamate 210, alanine 214, aspartate 216, and asparagine 247 each contribute to the Ca(2+) site. Residues glutamate 210, alanine 214, and aspartate 216 each contribute to the Mn(2+) site. Lysine 279 is a binding site for ATP. Pyridoxal 5'-phosphate is bound at residue serine 313. Asparagine 316 is a binding site for ATP.

Belongs to the serine/threonine dehydratase family. Homodimer. It depends on Mg(2+) as a cofactor. Mn(2+) serves as cofactor. Ca(2+) is required as a cofactor. Requires pyridoxal 5'-phosphate as cofactor. In terms of processing, S-nitrosylated, leading to decrease the enzyme activity. In terms of tissue distribution, expressed in the cerebellum, hippocampus, dorsolateral prefrontal cortex, and in motor neurons and glial cells of the lumbar spinal cord (at protein level). Increased in the dorsolateral prefrontal cortex of schizophrenic patients (at protein level). Brain: expressed at high levels in hippocampus and corpus callosum, intermediate levels in substantia nigra and caudate, and low levels in amygdala, thalamus, and subthalamic nuclei. Expressed in heart, skeletal muscle, kidney, and liver.

It carries out the reaction L-serine = D-serine. It catalyses the reaction D-serine = pyruvate + NH4(+). The catalysed reaction is L-serine = pyruvate + NH4(+). With respect to regulation, allosterically activated by magnesium, and possibly also other divalent metal cations. Allosterically activated by ATP, ADP or GTP. Competitively inhibited by malonate. Inhibited by meso-tartrate and malonate. In terms of biological role, catalyzes the synthesis of D-serine from L-serine. D-serine is a key coagonist with glutamate at NMDA receptors. Has dehydratase activity towards both L-serine and D-serine. The polypeptide is Serine racemase (SRR) (Homo sapiens (Human)).